A 352-amino-acid chain; its full sequence is Histidinol-phosphate aminotransferase (352 aa).

Residue Lys-208 is modified to N6-(pyridoxal phosphate)lysine.

This sequence belongs to the class-II pyridoxal-phosphate-dependent aminotransferase family. Histidinol-phosphate aminotransferase subfamily. In terms of assembly, homodimer. Pyridoxal 5'-phosphate serves as cofactor.

The catalysed reaction is L-histidinol phosphate + 2-oxoglutarate = 3-(imidazol-4-yl)-2-oxopropyl phosphate + L-glutamate. Its pathway is amino-acid biosynthesis; L-histidine biosynthesis; L-histidine from 5-phospho-alpha-D-ribose 1-diphosphate: step 7/9. The sequence is that of Histidinol-phosphate aminotransferase from Streptococcus sanguinis (strain SK36).